Consider the following 338-residue polypeptide: Nicotinate-nucleotide--dimethylbenzimidazole phosphoribosyltransferase (338 aa).

Glu-306 functions as the Proton acceptor in the catalytic mechanism.

Belongs to the CobT family.

The enzyme catalyses 5,6-dimethylbenzimidazole + nicotinate beta-D-ribonucleotide = alpha-ribazole 5'-phosphate + nicotinate + H(+). It participates in nucleoside biosynthesis; alpha-ribazole biosynthesis; alpha-ribazole from 5,6-dimethylbenzimidazole: step 1/2. Functionally, catalyzes the synthesis of alpha-ribazole-5'-phosphate from nicotinate mononucleotide (NAMN) and 5,6-dimethylbenzimidazole (DMB). The sequence is that of Nicotinate-nucleotide--dimethylbenzimidazole phosphoribosyltransferase from Cereibacter sphaeroides (strain ATCC 17023 / DSM 158 / JCM 6121 / CCUG 31486 / LMG 2827 / NBRC 12203 / NCIMB 8253 / ATH 2.4.1.) (Rhodobacter sphaeroides).